The chain runs to 492 residues: Phosphatidylinositol-glycan biosynthesis class W protein (492 aa).

5 consecutive transmembrane segments (helical) span residues 26 to 46, 59 to 79, 82 to 102, 127 to 147, and 156 to 176; these read FILT…ATFF, FILE…FTEL, FLIV…QKNV, YRAF…FQVF, and TYGI…GALV. The tract at residues 185 to 216 is disordered; that stretch reads IEKQQKKKREEEEDDNDKINKTSSSSSSSSSA. Residue Asn-204 is glycosylated (N-linked (GlcNAc...) asparagine). The span at 205–216 shows a compositional bias: low complexity; that stretch reads KTSSSSSSSSSA. Residues 264–284 form a helical membrane-spanning segment; sequence YGLHWNFFFTLGFVSISLAFL. The N-linked (GlcNAc...) asparagine glycan is linked to Asn-289. The next 4 membrane-spanning stretches (helical) occupy residues 290-310, 331-351, 364-384, and 399-419; these read ISAI…NSFG, ICSF…GTEL, FATK…LCEI, and VLAI…ITLI. A glycan (N-linked (GlcNAc...) asparagine) is linked at Asn-424. The next 2 helical transmembrane spans lie at 437 to 457 and 464 to 484; these read LFIF…MKTI and SMII…ILDY.

It belongs to the PIGW family.

It is found in the endoplasmic reticulum membrane. It participates in glycolipid biosynthesis; glycosylphosphatidylinositol-anchor biosynthesis. Its function is as follows. Probable acetyltransferase, which acetylates the inositol ring of phosphatidylinositol during biosynthesis of GPI-anchor. This chain is Phosphatidylinositol-glycan biosynthesis class W protein, found in Dictyostelium discoideum (Social amoeba).